The following is a 204-amino-acid chain: Guanylate kinase (204 aa).

The Guanylate kinase-like domain occupies 5–184; it reads GLLIVLSGPS…AVQRIKDIIA (180 aa). 12-19 lines the ATP pocket; it reads GPSGVGKG.

This sequence belongs to the guanylate kinase family.

It localises to the cytoplasm. It carries out the reaction GMP + ATP = GDP + ADP. In terms of biological role, essential for recycling GMP and indirectly, cGMP. The protein is Guanylate kinase of Enterococcus faecalis (strain ATCC 700802 / V583).